Here is a 348-residue protein sequence, read N- to C-terminus: Chaperone protein DnaJ (348 aa).

Residues 3-65 form the J domain; it reads DLYGILGVDH…EQRQRYDRHV (63 aa). Residues 109-191 form a CR-type zinc finger; sequence GGSQVVKIDS…CYGNGSRSAP (83 aa). Residues C122, C125, C139, C142, C165, C168, C179, and C182 each contribute to the Zn(2+) site. CXXCXGXG motif repeat units follow at residues 122-129, 139-146, 165-172, and 179-186; these read CDVCNGTR, CFDCNGSG, CSKCRGNG, and CRRCYGNG.

Belongs to the DnaJ family. In terms of assembly, homodimer. Zn(2+) serves as cofactor.

It is found in the cytoplasm. Its function is as follows. Participates actively in the response to hyperosmotic and heat shock by preventing the aggregation of stress-denatured proteins and by disaggregating proteins, also in an autonomous, DnaK-independent fashion. Unfolded proteins bind initially to DnaJ; upon interaction with the DnaJ-bound protein, DnaK hydrolyzes its bound ATP, resulting in the formation of a stable complex. GrpE releases ADP from DnaK; ATP binding to DnaK triggers the release of the substrate protein, thus completing the reaction cycle. Several rounds of ATP-dependent interactions between DnaJ, DnaK and GrpE are required for fully efficient folding. Also involved, together with DnaK and GrpE, in the DNA replication of plasmids through activation of initiation proteins. This is Chaperone protein DnaJ from Tropheryma whipplei (strain Twist) (Whipple's bacillus).